The chain runs to 317 residues: Ribosomal RNA small subunit methyltransferase H (317 aa).

S-adenosyl-L-methionine-binding positions include 36–38 (GGH), Asp-56, Phe-80, Asp-102, and Gln-109.

This sequence belongs to the methyltransferase superfamily. RsmH family.

Its subcellular location is the cytoplasm. It carries out the reaction cytidine(1402) in 16S rRNA + S-adenosyl-L-methionine = N(4)-methylcytidine(1402) in 16S rRNA + S-adenosyl-L-homocysteine + H(+). Its function is as follows. Specifically methylates the N4 position of cytidine in position 1402 (C1402) of 16S rRNA. The sequence is that of Ribosomal RNA small subunit methyltransferase H from Baumannia cicadellinicola subsp. Homalodisca coagulata.